Here is a 618-residue protein sequence, read N- to C-terminus: Carbamoyl phosphate synthase large chain, C-terminal section (618 aa).

Residues 1 to 78 (MDMEKLKEIL…ETFVYKEQDE (78 aa)) form an oligomerization domain region. The interval 79–477 (SNPSDRKKVI…YKAQLSANME (399 aa)) is carbamoyl phosphate synthetic domain. In terms of domain architecture, ATP-grasp spans 208–399 (SKLLKKLNIP…LAKLATKIML (192 aa)). Arginine 244, lysine 283, leucine 285, glutamate 290, glycine 315, valine 316, histidine 317, serine 318, glutamine 358, and glutamate 370 together coordinate ATP. Residues glutamine 358, glutamate 370, and asparagine 372 each contribute to the Mg(2+) site. Mn(2+)-binding residues include glutamine 358, glutamate 370, and asparagine 372. The region spanning 476 to 618 (MELPIVGNVF…ELDARIKNRF (143 aa)) is the MGS-like domain. Positions 478–618 (LPIVGNVFIS…ELDARIKNRF (141 aa)) are allosteric domain.

The protein belongs to the CarB family. In terms of assembly, composed of two chains; the small (or glutamine) chain promotes the hydrolysis of glutamine to ammonia, which is used by the large (or ammonia) chain to synthesize carbamoyl phosphate. Tetramer of heterodimers (alpha,beta)4. The cofactor is Mg(2+). Mn(2+) is required as a cofactor.

It catalyses the reaction hydrogencarbonate + L-glutamine + 2 ATP + H2O = carbamoyl phosphate + L-glutamate + 2 ADP + phosphate + 2 H(+). The enzyme catalyses hydrogencarbonate + NH4(+) + 2 ATP = carbamoyl phosphate + 2 ADP + phosphate + 2 H(+). The protein operates within amino-acid biosynthesis; L-arginine biosynthesis; carbamoyl phosphate from bicarbonate: step 1/1. It functions in the pathway pyrimidine metabolism; UMP biosynthesis via de novo pathway; (S)-dihydroorotate from bicarbonate: step 1/3. In terms of biological role, large subunit of the glutamine-dependent carbamoyl phosphate synthetase (CPSase). CPSase catalyzes the formation of carbamoyl phosphate from the ammonia moiety of glutamine, carbonate, and phosphate donated by ATP, constituting the first step of 2 biosynthetic pathways, one leading to arginine and/or urea and the other to pyrimidine nucleotides. The large subunit (synthetase) binds the substrates ammonia (free or transferred from glutamine from the small subunit), hydrogencarbonate and ATP and carries out an ATP-coupled ligase reaction, activating hydrogencarbonate by forming carboxy phosphate which reacts with ammonia to form carbamoyl phosphate. In Methanocaldococcus jannaschii (strain ATCC 43067 / DSM 2661 / JAL-1 / JCM 10045 / NBRC 100440) (Methanococcus jannaschii), this protein is Carbamoyl phosphate synthase large chain, C-terminal section (carB2).